The following is a 711-amino-acid chain: Receptor-like protein 43 (711 aa).

An N-terminal signal peptide occupies residues Met-1–Ala-30. Residues Ala-31 to Ala-666 are Extracellular-facing. N-linked (GlcNAc...) asparagine glycans are attached at residues Asn-78, Asn-114, Asn-143, Asn-167, and Asn-191. LRR repeat units lie at residues Leu-120–Asn-143, Leu-144–Leu-168, His-170–Leu-192, Ser-193–Leu-216, His-218–Leu-240, Ser-241–Gln-266, Thr-268–Leu-288, and Pro-289–His-316. N-linked (GlcNAc...) asparagine glycosylation is found at Asn-239, Asn-242, Asn-252, and Asn-263. 5 N-linked (GlcNAc...) asparagine glycosylation sites follow: Asn-295, Asn-323, Asn-347, Asn-362, and Asn-372. Residues Leu-317–Glu-334 form an LRR 9; degenerate repeat. LRR repeat units follow at residues Leu-335 to Asn-358, Lys-360 to Ile-384, Arg-386 to Phe-406, Ser-407 to Leu-430, Pro-431 to Phe-452, Leu-453 to Lys-476, Leu-519 to Leu-543, Lys-544 to Leu-567, Thr-568 to Leu-591, and Phe-593 to Thr-616. Asn-420 carries N-linked (GlcNAc...) asparagine glycosylation. Asn-466 carries an N-linked (GlcNAc...) asparagine glycan. 3 N-linked (GlcNAc...) asparagine glycosylation sites follow: Asn-550, Asn-590, and Asn-598. The chain crosses the membrane as a helical span at residues Ala-667–Phe-687. Residues Tyr-688 to His-711 are Cytoplasmic-facing.

Belongs to the RLP family.

The protein resides in the cell membrane. The protein is Receptor-like protein 43 of Arabidopsis thaliana (Mouse-ear cress).